A 391-amino-acid polypeptide reads, in one-letter code: Phosphoglycerate kinase (391 aa).

Residues 21-23, Arg-36, 59-62, Arg-113, and Arg-146 contribute to the substrate site; these read DLN and HLGR. ATP is bound by residues Lys-197, Glu-319, and 345-348; that span reads GGDT.

The protein belongs to the phosphoglycerate kinase family. In terms of assembly, monomer.

The protein resides in the cytoplasm. It carries out the reaction (2R)-3-phosphoglycerate + ATP = (2R)-3-phospho-glyceroyl phosphate + ADP. The protein operates within carbohydrate degradation; glycolysis; pyruvate from D-glyceraldehyde 3-phosphate: step 2/5. This Xanthomonas axonopodis pv. citri (strain 306) protein is Phosphoglycerate kinase.